A 667-amino-acid chain; its full sequence is Protein OS-9 (667 aa).

The N-terminal stretch at 1-25 is a signal peptide; it reads MAAETLLSSLLGLLLLGLLLPATLT. In terms of domain architecture, MRH spans 108 to 230; sequence APCLLKTKDW…TIRTPRLCPH (123 aa). Cys-110 and Cys-123 are disulfide-bonded. The a mannooligosaccharide derivative site is built by Trp-117, Trp-118, and Gln-130. The N-linked (GlcNAc...) asparagine glycan is linked to Asn-177. 2 disulfide bridges follow: Cys-181–Cys-216 and Cys-196–Cys-228. 4 residues coordinate a mannooligosaccharide derivative: Asp-182, Arg-188, Glu-212, and Tyr-218. Disordered stretches follow at residues 262-450, 506-541, and 636-667; these read QADS…SDRE, EKQS…EHRV, and ERQR…EFDF. Composition is skewed to basic and acidic residues over residues 263-279, 304-328, and 396-408; these read ADSK…RQDP, ENSK…KEET, and PSRE…KGDP. Residues 410 to 429 show a composition bias toward acidic residues; it reads QQNEVEEEEDDEDEDEDEDE. The span at 430–450 shows a compositional bias: basic and acidic residues; the sequence is RQLLGEFEKELEGILLPSDRE. Residues 514-523 are compositionally biased toward basic residues; it reads KKHRKRRVVP. A compositionally biased stretch (basic and acidic residues) spans 636–647; it reads ERQRQKELESNY.

It belongs to the OS-9 family. Component of the HRD1 complex, which comprises at least SYNV1/HRD1, DERL1/2, FAM8A1, HERPUD1/HERP, OS9, SEL1L and UBE2J1. FAM8A1 is stabilized by interaction with SYNV1, which prevents its proteasomal degradation. OS9 and UBE2J1 recruitment to the complex may be mediated by SEL1L. Through this complex, may interact with ERLEC1 and HSPA5. Interacts (via C-terminus) with CPNE6 (via second C2 domain); this interaction occurs in a calcium-dependent manner in vitro. Interacts with CREB3. Intramolecular disulfide bonds.

It localises to the endoplasmic reticulum lumen. In terms of biological role, lectin component of the HRD1 complex, which functions in endoplasmic reticulum (ER) quality control and ER-associated degradation (ERAD). Specifically recognizes and binds improperly folded glycoproteins as well as hyperglycosylated proteins, retain them in the ER, and transfers them to the ubiquitination machinery and promote their degradation. Possible targets include TRPV4 as well as hyperglycosylated HSP90B1. This Bos taurus (Bovine) protein is Protein OS-9 (OS9).